Here is a 1407-residue protein sequence, read N- to C-terminus: DNA-directed RNA polymerase subunit beta' (1407 aa).

Residues Cys70, Cys72, Cys85, and Cys88 each contribute to the Zn(2+) site. Mg(2+) contacts are provided by Asp458, Asp460, and Asp462. Cys814, Cys888, Cys895, and Cys898 together coordinate Zn(2+).

The protein belongs to the RNA polymerase beta' chain family. In terms of assembly, the RNAP catalytic core consists of 2 alpha, 1 beta, 1 beta' and 1 omega subunit. When a sigma factor is associated with the core the holoenzyme is formed, which can initiate transcription. It depends on Mg(2+) as a cofactor. The cofactor is Zn(2+).

The catalysed reaction is RNA(n) + a ribonucleoside 5'-triphosphate = RNA(n+1) + diphosphate. DNA-dependent RNA polymerase catalyzes the transcription of DNA into RNA using the four ribonucleoside triphosphates as substrates. The protein is DNA-directed RNA polymerase subunit beta' of Leptothrix cholodnii (strain ATCC 51168 / LMG 8142 / SP-6) (Leptothrix discophora (strain SP-6)).